Here is a 126-residue protein sequence, read N- to C-terminus: Large ribosomal subunit protein bL12 (126 aa).

Belongs to the bacterial ribosomal protein bL12 family. In terms of assembly, homodimer. Part of the ribosomal stalk of the 50S ribosomal subunit. Forms a multimeric L10(L12)X complex, where L10 forms an elongated spine to which 2 to 4 L12 dimers bind in a sequential fashion. Binds GTP-bound translation factors.

In terms of biological role, forms part of the ribosomal stalk which helps the ribosome interact with GTP-bound translation factors. Is thus essential for accurate translation. The chain is Large ribosomal subunit protein bL12 from Streptococcus pyogenes serotype M28 (strain MGAS6180).